The primary structure comprises 89 residues: Small ribosomal subunit protein uS15 (89 aa).

Belongs to the universal ribosomal protein uS15 family. As to quaternary structure, part of the 30S ribosomal subunit. Forms a bridge to the 50S subunit in the 70S ribosome, contacting the 23S rRNA.

One of the primary rRNA binding proteins, it binds directly to 16S rRNA where it helps nucleate assembly of the platform of the 30S subunit by binding and bridging several RNA helices of the 16S rRNA. In terms of biological role, forms an intersubunit bridge (bridge B4) with the 23S rRNA of the 50S subunit in the ribosome. The protein is Small ribosomal subunit protein uS15 of Bifidobacterium animalis subsp. lactis (strain AD011).